The sequence spans 410 residues: MGAQVRLPPGEPCQEGYVLSLVCPNSSQAWCEITNVSQLLASPVLYTDLNSSINKLSISANVENKYSLYVGLVLAVSSSIFIGSSFILKKKGLLQLASKGITRAGQGGHSYLKEWLWWVGLLSMGVGEAANFAAYAFAPATLVTPLGALSVLISAILSSYFLNEHLNIHGKIGCILSILGSTVMVIHAPQEEEVTSLHEMEMKLRDPGFISFAVIVTVISLVLILIVAPKKGQTNILVYISICSLIGAFSVSSVKGLGIAIKELIEWKPVYKHPLVFVLLAVLVLSVTTQINYLNKALDTFNTSIVTPIYYVFFTSMVVTCSAILFQEWYGMTAGDIIGTLSGFFTIIIGIFLLHAFKNTDITWSELTSTAKKEAVSLNVSENNYVLLENLECSAPGYNDDVTLFSRTDD.

Topologically, residues 1–67 (MGAQVRLPPG…ISANVENKYS (67 aa)) are extracellular. N-linked (GlcNAc...) asparagine glycosylation is found at Asn-25, Asn-35, and Asn-50. Residues 68-88 (LYVGLVLAVSSSIFIGSSFIL) traverse the membrane as a helical segment. The Cytoplasmic portion of the chain corresponds to 89 to 114 (KKKGLLQLASKGITRAGQGGHSYLKE). A helical transmembrane segment spans residues 115-135 (WLWWVGLLSMGVGEAANFAAY). Ala-136 is a topological domain (extracellular). A helical transmembrane segment spans residues 137 to 157 (FAPATLVTPLGALSVLISAIL). Residues 158–165 (SSYFLNEH) are Cytoplasmic-facing. The helical transmembrane segment at 166 to 186 (LNIHGKIGCILSILGSTVMVI) threads the bilayer. Residues 187-207 (HAPQEEEVTSLHEMEMKLRDP) lie on the Extracellular side of the membrane. Residues 208–228 (GFISFAVIVTVISLVLILIVA) form a helical membrane-spanning segment. Over 229–233 (PKKGQ) the chain is Cytoplasmic. A helical membrane pass occupies residues 234–254 (TNILVYISICSLIGAFSVSSV). At 255–273 (KGLGIAIKELIEWKPVYKH) the chain is on the extracellular side. Residues 274 to 294 (PLVFVLLAVLVLSVTTQINYL) form a helical membrane-spanning segment. The Cytoplasmic segment spans residues 295–304 (NKALDTFNTS). The chain crosses the membrane as a helical span at residues 305 to 325 (IVTPIYYVFFTSMVVTCSAIL). Over 326–336 (FQEWYGMTAGD) the chain is Extracellular. A helical membrane pass occupies residues 337-357 (IIGTLSGFFTIIIGIFLLHAF). The Cytoplasmic portion of the chain corresponds to 358-410 (KNTDITWSELTSTAKKEAVSLNVSENNYVLLENLECSAPGYNDDVTLFSRTDD).

This sequence belongs to the NIPA family.

The protein resides in the golgi apparatus membrane. The catalysed reaction is Mg(2+)(in) = Mg(2+)(out). Functionally, acts as a Mg(2+) transporter. Can also transport other divalent cations such as Fe(2+), Sr(2+), Ba(2+), Mn(2+), Cu(2+) and Co(2+) but to a much less extent than Mg(2+). This Pongo abelii (Sumatran orangutan) protein is Magnesium transporter NIPA3 (NIPAL1).